The primary structure comprises 623 residues: Chaperone protein dnaK (623 aa).

The interval threonine 598–lysine 623 is disordered.

Belongs to the heat shock protein 70 family.

It localises to the plastid. Its subcellular location is the chloroplast. Its function is as follows. Acts as a chaperone. In Emiliania huxleyi (Coccolithophore), this protein is Chaperone protein dnaK.